The chain runs to 271 residues: 3-methyl-2-oxobutanoate hydroxymethyltransferase (271 aa).

Mg(2+) contacts are provided by aspartate 53 and aspartate 92. 3-methyl-2-oxobutanoate is bound by residues 53-54 (DS), aspartate 92, and lysine 120. Mg(2+) is bound at residue glutamate 122. The active-site Proton acceptor is the glutamate 189.

Belongs to the PanB family. In terms of assembly, homodecamer; pentamer of dimers. It depends on Mg(2+) as a cofactor.

It is found in the cytoplasm. It carries out the reaction 3-methyl-2-oxobutanoate + (6R)-5,10-methylene-5,6,7,8-tetrahydrofolate + H2O = 2-dehydropantoate + (6S)-5,6,7,8-tetrahydrofolate. It participates in cofactor biosynthesis; (R)-pantothenate biosynthesis; (R)-pantoate from 3-methyl-2-oxobutanoate: step 1/2. Catalyzes the reversible reaction in which hydroxymethyl group from 5,10-methylenetetrahydrofolate is transferred onto alpha-ketoisovalerate to form ketopantoate. The chain is 3-methyl-2-oxobutanoate hydroxymethyltransferase from Burkholderia thailandensis (strain ATCC 700388 / DSM 13276 / CCUG 48851 / CIP 106301 / E264).